We begin with the raw amino-acid sequence, 383 residues long: MTPTTETTVGIGGAAESTDMVLNIGPQHPSTHGVLRLKLVLDGERITSAEPVIGYMHRGAEKLFEARDYRQIIMLANRHDWLSAFSNELGVVLAVERMLGMEVPTRAVWTRTLLAELNRVLNHLMFLGSYPLELGGITPVFYAFREREVLQNVMEEVSGGRMHYMFNRVGGLKEDLPAGWTTRARGAVAAVRSRMDVFDDLVLGNEIFRGRTRGVGALSAEAVHAYGVSGPVARASGVDFDLRRDEPYLAYGELQDTLKVVTRTDGDCLARFECLLAQTHNALDLADACLDRLAELAPGPVNQRLPKVLKAPEGHTYAWTENPLGINGYYLVSKGEKTPYRLKLRSASYNNIQALAELLPGTLVADMVAILGSLFFVVGDIDK.

It belongs to the complex I 49 kDa subunit family. As to quaternary structure, NDH-1 is composed of 14 different subunits. Subunits NuoB, C, D, E, F, and G constitute the peripheral sector of the complex.

It is found in the cell membrane. It carries out the reaction a quinone + NADH + 5 H(+)(in) = a quinol + NAD(+) + 4 H(+)(out). Functionally, NDH-1 shuttles electrons from NADH, via FMN and iron-sulfur (Fe-S) centers, to quinones in the respiratory chain. The immediate electron acceptor for the enzyme in this species is believed to be a menaquinone. Couples the redox reaction to proton translocation (for every two electrons transferred, four hydrogen ions are translocated across the cytoplasmic membrane), and thus conserves the redox energy in a proton gradient. The protein is NADH-quinone oxidoreductase subunit D 1 of Streptomyces coelicolor (strain ATCC BAA-471 / A3(2) / M145).